Here is a 223-residue protein sequence, read N- to C-terminus: CKLF-like MARVEL transmembrane domain-containing protein 5 (223 aa).

The MARVEL domain occupies 29–213; the sequence is FLTSHKGILL…DAFKIYRTEM (185 aa). The next 4 membrane-spanning stretches (helical) occupy residues 35–55, 56–76, 162–182, and 186–206; these read GILLETELALTLIIFICFTAS, ISAYMAAALLEFFITLAFLFL, FLRCVSAIIIFLVVSFAAVTS, and AAIAAFVFGIILVSIFAYDAF.

Belongs to the chemokine-like factor family. As to expression, highly expressed in the brain.

It localises to the membrane. The protein is CKLF-like MARVEL transmembrane domain-containing protein 5 (CMTM5) of Homo sapiens (Human).